The primary structure comprises 198 residues: Pyridoxal 5'-phosphate synthase subunit PdxT (198 aa).

Position 52–54 (52–54 (GES)) interacts with L-glutamine. Residue Cys-84 is the Nucleophile of the active site. L-glutamine-binding positions include Arg-115 and 142 to 143 (IR). Active-site charge relay system residues include His-178 and Glu-180.

This sequence belongs to the glutaminase PdxT/SNO family. In the presence of PdxS, forms a dodecamer of heterodimers. Only shows activity in the heterodimer.

It catalyses the reaction aldehydo-D-ribose 5-phosphate + D-glyceraldehyde 3-phosphate + L-glutamine = pyridoxal 5'-phosphate + L-glutamate + phosphate + 3 H2O + H(+). It carries out the reaction L-glutamine + H2O = L-glutamate + NH4(+). It functions in the pathway cofactor biosynthesis; pyridoxal 5'-phosphate biosynthesis. Its function is as follows. Catalyzes the hydrolysis of glutamine to glutamate and ammonia as part of the biosynthesis of pyridoxal 5'-phosphate. The resulting ammonia molecule is channeled to the active site of PdxS. This chain is Pyridoxal 5'-phosphate synthase subunit PdxT, found in Archaeoglobus fulgidus (strain ATCC 49558 / DSM 4304 / JCM 9628 / NBRC 100126 / VC-16).